Here is an 83-residue protein sequence, read N- to C-terminus: Putative snRNP Sm-like protein (83 aa).

One can recognise a Sm domain in the interval 9–81 (KPMDVLKSAL…VIFVSPSKGD (73 aa)).

It belongs to the snRNP Sm proteins family.

This chain is Putative snRNP Sm-like protein, found in Thermoplasma acidophilum (strain ATCC 25905 / DSM 1728 / JCM 9062 / NBRC 15155 / AMRC-C165).